Consider the following 361-residue polypeptide: Versatile peroxidase VPL2 (361 aa).

The first 22 residues, 1–22 (MSFKTLSALALALGAAVQFASA), serve as a signal peptide directing secretion. The propeptide occupies 23 to 30 (AVPLVQKR). 4 disulfides stabilise this stretch: C33–C45, C44–C308, C64–C144, and C272–C337. Positions 66 and 70 each coordinate Mn(2+). Residue H77 is the Proton acceptor of the active site. Positions 78, 90, 92, and 94 each coordinate Ca(2+). N-linked (GlcNAc...) asparagine glycosylation occurs at N126. The active-site Tryptophan radical intermediate is W194. H199 is a heme b binding site. S200 is a Ca(2+) binding site. Residue 203 to 207 (AADKV) participates in heme b binding. Residue D205 participates in Mn(2+) binding. Ca(2+) contacts are provided by D217, T219, V222, and D224.

This sequence belongs to the peroxidase family. Ligninase subfamily. Heme b is required as a cofactor. The cofactor is Ca(2+).

It localises to the secreted. It catalyses the reaction 1-(4-hydroxy-3-methoxyphenyl)-2-(2-methoxyphenoxy)propane-1,3-diol + H2O2 = guaiacol + vanillin + glycolaldehyde + H2O. It carries out the reaction 2 Mn(2+) + H2O2 + 2 H(+) = 2 Mn(3+) + 2 H2O. A versatile ligninolytic peroxidase that combines the substrate specificity characteristics of the two other ligninolytic peroxidases, manganese peroxidase and lignin peroxidase. The chain is Versatile peroxidase VPL2 (vpl2) from Pleurotus eryngii (Boletus of the steppes).